The primary structure comprises 111 residues: Protein IDA-LIKE 5 (111 aa).

The signal sequence occupies residues 1-27 (MGNKRIKAMMILVVMIMMVFSWRICEA). Positions 46–56 (RRPNPRNHHHQ) are enriched in basic residues. The interval 46–65 (RRPNPRNHHHQNQGFNGDDY) is disordered.

In terms of tissue distribution, expressed mainly in flowers. Lower levels in buds and seedlings. Detected in vascular tissues and in hydathodes.

It localises to the secreted. The protein localises to the extracellular space. In terms of biological role, may be involved in floral abscission. The protein is Protein IDA-LIKE 5 (IDL5) of Arabidopsis thaliana (Mouse-ear cress).